The chain runs to 206 residues: ATP-dependent dethiobiotin synthetase BioD (206 aa).

12–17 (DSGKTL) serves as a coordination point for ATP. Thr16 provides a ligand contact to Mg(2+). Residue Lys32 is part of the active site. Glu99 provides a ligand contact to Mg(2+). Residue 99–102 (EGAG) participates in ATP binding.

Belongs to the dethiobiotin synthetase family. As to quaternary structure, homodimer. Requires Mg(2+) as cofactor.

It localises to the cytoplasm. It catalyses the reaction (7R,8S)-7,8-diammoniononanoate + CO2 + ATP = (4R,5S)-dethiobiotin + ADP + phosphate + 3 H(+). It participates in cofactor biosynthesis; biotin biosynthesis; biotin from 7,8-diaminononanoate: step 1/2. Functionally, catalyzes a mechanistically unusual reaction, the ATP-dependent insertion of CO2 between the N7 and N8 nitrogen atoms of 7,8-diaminopelargonic acid (DAPA, also called 7,8-diammoniononanoate) to form a ureido ring. The polypeptide is ATP-dependent dethiobiotin synthetase BioD (Cytophaga hutchinsonii (strain ATCC 33406 / DSM 1761 / CIP 103989 / NBRC 15051 / NCIMB 9469 / D465)).